Consider the following 241-residue polypeptide: ATP synthase subunit a (241 aa).

The next 5 membrane-spanning stretches (helical) occupy residues 30 to 50, 91 to 111, 128 to 148, 193 to 213, and 214 to 234; these read GQVF…ISLG, FIGT…LIPW, INTT…AGLS, LVVG…VMFL, and GLFT…YYIG.

Belongs to the ATPase A chain family. As to quaternary structure, F-type ATPases have 2 components, CF(1) - the catalytic core - and CF(0) - the membrane proton channel. CF(1) has five subunits: alpha(3), beta(3), gamma(1), delta(1), epsilon(1). CF(0) has four main subunits: a, b, b' and c.

Its subcellular location is the cellular thylakoid membrane. Functionally, key component of the proton channel; it plays a direct role in the translocation of protons across the membrane. This Prochlorococcus marinus (strain MIT 9312) protein is ATP synthase subunit a.